The primary structure comprises 435 residues: Homogentisate 1,2-dioxygenase (435 aa).

Catalysis depends on His289, which acts as the Proton acceptor. 2 residues coordinate Fe cation: His332 and Glu338. Residues Tyr347 and His368 each contribute to the homogentisate site. His368 is a Fe cation binding site.

Belongs to the homogentisate dioxygenase family. As to quaternary structure, hexamer; dimer of trimers. Requires Fe cation as cofactor.

It catalyses the reaction homogentisate + O2 = 4-maleylacetoacetate + H(+). The protein operates within amino-acid degradation; L-phenylalanine degradation; acetoacetate and fumarate from L-phenylalanine: step 4/6. Its function is as follows. Involved in the catabolism of homogentisate (2,5-dihydroxyphenylacetate or 2,5-OH-PhAc), a central intermediate in the degradation of phenylalanine and tyrosine. Catalyzes the oxidative ring cleavage of the aromatic ring of homogentisate to yield maleylacetoacetate. In Pseudomonas savastanoi pv. phaseolicola (strain 1448A / Race 6) (Pseudomonas syringae pv. phaseolicola (strain 1448A / Race 6)), this protein is Homogentisate 1,2-dioxygenase.